The primary structure comprises 676 residues: Lutropin-choriogonadotropic hormone receptor (676 aa).

An N-terminal signal peptide occupies residues 1-29; it reads MKQPLLALQLLKLLLLLLLPLPPLPRALR. Residues 30–340 lie on the Extracellular side of the membrane; it reads EARCCPEPCN…EDIMGYDFLR (311 aa). Asparagine 103 carries N-linked (GlcNAc...) asparagine glycosylation. 5 LRR repeats span residues 126–151, 153–175, 176–200, 201–224, and 225–248; these read LPRLKYLSICNTGIRKFPDVTKIFSS, TNFILEICDNLHITTIPGNAFQG, MNNESITLKLYGNGFEEVQSHAFNG, TTVISLVLKENVHLERIHNGAFRG, and ATGPSILDISSTKLQALPSHGLES. N-linked (GlcNAc...) asparagine glycosylation is found at asparagine 178 and asparagine 199. At tyrosine 308 the chain carries Sulfotyrosine. Residues 341 to 362 traverse the membrane as a helical segment; that stretch reads VLIWLINILAIMGNMTVLFVLL. The Cytoplasmic segment spans residues 363–372; it reads TSRYKLTVPR. Residues 373-393 traverse the membrane as a helical segment; the sequence is FLMCNLSFADFCMGLYLLLIA. Topologically, residues 394–416 are extracellular; that stretch reads SVDSQTKGQYYNHAIDWQTGSGC. Cysteine 416 and cysteine 491 are disulfide-bonded. Residues 417 to 439 form a helical membrane-spanning segment; sequence NTAGFFTVFASELSVYTLTVITL. At 440 to 459 the chain is on the cytoplasmic side; that stretch reads ERWHTITYAIHLDQKLRLRH. A helical membrane pass occupies residues 460–482; that stretch reads AILIMLGGWLFSSLIAMLPLVGV. Topologically, residues 483-502 are extracellular; sequence SNYMKVSICFPMDVETTLSQ. Residues 503–526 traverse the membrane as a helical segment; it reads IYILTILILNVVAFIIICACYIKI. Topologically, residues 527–547 are cytoplasmic; it reads YFAVRNPELMATNKDTKIAKK. The helical transmembrane segment at 548 to 571 threads the bilayer; that stretch reads MAILIFTDFTCMAPISFFAISAAF. Over 572-582 the chain is Extracellular; that stretch reads KMPLITVTNSK. Residues 583-604 form a helical membrane-spanning segment; the sequence is VLLVLFYPINSCANPFLYAIFT. The Cytoplasmic portion of the chain corresponds to 605–676; the sequence is KTFRRDFFLL…LLDKTCYKEY (72 aa). S-palmitoyl cysteine attachment occurs at residues cysteine 620 and cysteine 621.

The protein belongs to the G-protein coupled receptor 1 family. FSH/LSH/TSH subfamily. In terms of processing, sulfated.

Its subcellular location is the cell membrane. Receptor for lutropin-choriogonadotropic hormone. The activity of this receptor is mediated by G proteins which activate adenylate cyclase. This chain is Lutropin-choriogonadotropic hormone receptor (LHCGR), found in Callithrix jacchus (White-tufted-ear marmoset).